The primary structure comprises 598 residues: Vanadium-dependent bromoperoxidase (598 aa).

Positions 361, 363, 365, 368, and 370 each coordinate Ca(2+). Vanadate-binding residues include Lys400 and Arg408. His480 is an active-site residue. Positions 485, 486, 487, 547, and 553 each coordinate vanadate. His487 is a catalytic residue.

Belongs to the vanadium-dependent haloperoxidase family. Homododecamer. It depends on Ca(2+) as a cofactor. Requires vanadate as cofactor.

The catalysed reaction is RH + Br(-) + H2O2 = RBr + 2 H2O.. Functionally, catalyzes the halogenation of organic substrates in the presence of hydrogen peroxide. This chain is Vanadium-dependent bromoperoxidase, found in Corallina officinalis (Coral seaweed).